The primary structure comprises 483 residues: Aspartyl/glutamyl-tRNA(Asn/Gln) amidotransferase subunit B (483 aa).

The protein belongs to the GatB/GatE family. GatB subfamily. As to quaternary structure, heterotrimer of A, B and C subunits.

The enzyme catalyses L-glutamyl-tRNA(Gln) + L-glutamine + ATP + H2O = L-glutaminyl-tRNA(Gln) + L-glutamate + ADP + phosphate + H(+). It catalyses the reaction L-aspartyl-tRNA(Asn) + L-glutamine + ATP + H2O = L-asparaginyl-tRNA(Asn) + L-glutamate + ADP + phosphate + 2 H(+). Allows the formation of correctly charged Asn-tRNA(Asn) or Gln-tRNA(Gln) through the transamidation of misacylated Asp-tRNA(Asn) or Glu-tRNA(Gln) in organisms which lack either or both of asparaginyl-tRNA or glutaminyl-tRNA synthetases. The reaction takes place in the presence of glutamine and ATP through an activated phospho-Asp-tRNA(Asn) or phospho-Glu-tRNA(Gln). This Rickettsia canadensis (strain McKiel) protein is Aspartyl/glutamyl-tRNA(Asn/Gln) amidotransferase subunit B.